The primary structure comprises 347 residues: Phosphate acyltransferase (347 aa).

The protein belongs to the PlsX family. As to quaternary structure, homodimer. Probably interacts with PlsY.

It localises to the cytoplasm. It carries out the reaction a fatty acyl-[ACP] + phosphate = an acyl phosphate + holo-[ACP]. Its pathway is lipid metabolism; phospholipid metabolism. Catalyzes the reversible formation of acyl-phosphate (acyl-PO(4)) from acyl-[acyl-carrier-protein] (acyl-ACP). This enzyme utilizes acyl-ACP as fatty acyl donor, but not acyl-CoA. In Sinorhizobium fredii (strain NBRC 101917 / NGR234), this protein is Phosphate acyltransferase.